A 266-amino-acid polypeptide reads, in one-letter code: Large ribosomal subunit protein uL2m (266 aa).

This sequence belongs to the universal ribosomal protein uL2 family.

Its subcellular location is the mitochondrion. The chain is Large ribosomal subunit protein uL2m (mrpl2) from Dictyostelium discoideum (Social amoeba).